Consider the following 303-residue polypeptide: Proteasome subunit beta (303 aa).

The propeptide at 1 to 67 (MTWQFPDRLS…SGGTGQLPHG (67 aa)) is removed in mature form; by autocatalysis. Thr-68 (nucleophile) is an active-site residue.

It belongs to the peptidase T1B family. The 20S proteasome core is composed of 14 alpha and 14 beta subunits that assemble into four stacked heptameric rings, resulting in a barrel-shaped structure. The two inner rings, each composed of seven catalytic beta subunits, are sandwiched by two outer rings, each composed of seven alpha subunits. The catalytic chamber with the active sites is on the inside of the barrel. Has a gated structure, the ends of the cylinder being occluded by the N-termini of the alpha-subunits. Is capped by the proteasome-associated ATPase, ARC.

The protein localises to the cytoplasm. The enzyme catalyses Cleavage of peptide bonds with very broad specificity.. The protein operates within protein degradation; proteasomal Pup-dependent pathway. With respect to regulation, the formation of the proteasomal ATPase ARC-20S proteasome complex, likely via the docking of the C-termini of ARC into the intersubunit pockets in the alpha-rings, may trigger opening of the gate for substrate entry. Interconversion between the open-gate and close-gate conformations leads to a dynamic regulation of the 20S proteasome proteolysis activity. In terms of biological role, component of the proteasome core, a large protease complex with broad specificity involved in protein degradation. The polypeptide is Proteasome subunit beta (Mycobacterium avium (strain 104)).